Reading from the N-terminus, the 1275-residue chain is MKRIPRKTKGKSSGKGNDSTERSDDGSSQLRDKQNNKAGPATTEPGTSNREQYRARPGIASVQRATESAELPMKNNDEGTPDKKGNTRGDLVNEHSEAKDEADEATQKQAKDTDKSKAQVTYSDTGINNANELSRSGNVDNEGGSNQKPMSTRIAEATSAIVSKHPARVGLPPTASSGHGYQCHVCSAVLFSPLDLDAHVASHGLHGNMTLTSSEIQRHITEFISSWQNHPIVQVSADVENKKTAQLLHADTPRLVTWDAGLCTSFKIVPIVPAQVPQDVLAYTFFTSSYAIQSPFPEAAVSRIVVHTRWASNVDFDRDSSVIMAPPTENNIHLFKQLLNTETLSVRGANPLMFRANVLHMLLEFVLDNLYLNRHTGFSQDHTPFTEGANLRSLPGPDAEKWYSIMYPTRMGTPNVSKICNFVASCVRNRVGRFDRAQMMNGAMSEWVDVFETSDALTVSIRGRWMARLARMNINPTEIEWALTECAQGYVTVTSPYAPSVNRLMPYRISNAERQISQIIRIMNIGNNATVIQPVLQDISVLLQRISPLQIDPTIISNTMSTVSESTTQTLSPASSILGKLRPSNSDFSSFRVALAGWLYNGVVTTVIDDSSYPKDGGSVTSLENLWDFFILALALPLTTDPCAPVKAFMTLANMMVGFETIPMDNQIYTQSRRASAFSTPHTWPRCFMNIQLISPIDAPILRQWAEIIHRYWPNPSQIRYGAPNVFGSANLFTPPEVLLLPIDHQPANVTTPTLDFTNELTNWRARVCELMKNLVDNQRYQPGWTQSLVSSMRGTLDKLKLIKSMTPMYLQQLAPVELAVIAPMLPFPPFQVPYVRLDRDRVPTMVGVTRQSRDTITQPALSLSTTNTTVGVPLALDARAITVALLSGKYPPDLVTNVWYADAIYPMYADTEVFSNLQRDMITCEAVQTLVTLVAQISETQYPVDRYLDWIPSLRASAATAATFAEWVNTSMKTAFDLSDMLLEPLLSGDPRMTQLAIQYQQYNGRTFNVIPEMPGSVIADCVQLTAEVFNHEYNLFGIARGDIIIGRVQSTHLWSPLAPPPDLVFDRDTPGVHIFGRDCRISFGMNGAAPMIRDETGMMVPFEGNWIFPLALWQMNTRYFNQQFDAWIKTGELRIRIEMGAYPYMLHYYDPRQYANAWNLTSAWLEEITPTSIPSVPFMVPISSDHDISSAPAVQYIISTEYNDRSLFCTNSSSPQTIAGPDKHIPVERYNILTNPDAPPTQIQLPEVVDLYNVVTRYAYETPPITAVVMGVP.

The segment covering 1-12 has biased composition (basic residues); the sequence is MKRIPRKTKGKS. The tract at residues 1–149 is disordered; the sequence is MKRIPRKTKG…DNEGGSNQKP (149 aa). Composition is skewed to basic and acidic residues over residues 18 to 35 and 75 to 117; these read DSTERSDDGSSQLRDKQN and NNDE…DKSK. Positions 118 to 149 are enriched in polar residues; the sequence is AQVTYSDTGINNANELSRSGNVDNEGGSNQKP. A C2H2-type zinc finger spans residues 181–203; that stretch reads YQCHVCSAVLFSPLDLDAHVASH.

Belongs to the turreted BTV-fold inner capsid family. In terms of assembly, homodecamer; each decamer is made up of two conformers of VP2, called VP2A and VP2B. 12 homodecamers assemble to form an icosahedral capsid. Interacts with protein mu-NS; in viral inclusions. The cofactor is Mg(2+). It depends on Mn(2+) as a cofactor.

It localises to the virion. The catalysed reaction is ATP + H2O = ADP + phosphate + H(+). In terms of biological role, inner capsid protein that self-assembles to form an icosahedral capsid with a T=2 symmetry, which consists of 120 copies of VP2, with channels at each of its five-fold vertices. This capsid constitutes the innermost concentric layer of the viral mature particle. Functionally, displays NTPase, RNA 5'-triphosphatase (RTPase) and RNA helicase activities and probably participates in transcription of the viral genome. Helicase activity might be involved in unwinding or reannealing dsRNA during RNA synthesis. RTPase enzymatic activity represents the first step in RNA capping, which yields a 5'-diphosphorylated plus-strand RNA. The sequence is that of Inner capsid protein lambda-1 (L3) from Reovirus type 1 (strain Lang) (T1L).